Here is an 82-residue protein sequence, read N- to C-terminus: ATP synthase subunit c, chloroplastic (82 aa).

Helical transmembrane passes span glycine 7–glycine 27 and leucine 57–alanine 77.

It belongs to the ATPase C chain family. In terms of assembly, F-type ATPases have 2 components, F(1) - the catalytic core - and F(0) - the membrane proton channel. F(1) has five subunits: alpha(3), beta(3), gamma(1), delta(1), epsilon(1). F(0) has four main subunits: a(1), b(1), b'(1) and c(10-14). The alpha and beta chains form an alternating ring which encloses part of the gamma chain. F(1) is attached to F(0) by a central stalk formed by the gamma and epsilon chains, while a peripheral stalk is formed by the delta, b and b' chains.

It localises to the plastid. The protein localises to the chloroplast thylakoid membrane. Its function is as follows. F(1)F(0) ATP synthase produces ATP from ADP in the presence of a proton or sodium gradient. F-type ATPases consist of two structural domains, F(1) containing the extramembraneous catalytic core and F(0) containing the membrane proton channel, linked together by a central stalk and a peripheral stalk. During catalysis, ATP synthesis in the catalytic domain of F(1) is coupled via a rotary mechanism of the central stalk subunits to proton translocation. Key component of the F(0) channel; it plays a direct role in translocation across the membrane. A homomeric c-ring of between 10-14 subunits forms the central stalk rotor element with the F(1) delta and epsilon subunits. The chain is ATP synthase subunit c, chloroplastic from Emiliania huxleyi (Coccolithophore).